The sequence spans 328 residues: D-cysteine desulfhydrase (328 aa).

The residue at position 51 (K51) is an N6-(pyridoxal phosphate)lysine.

This sequence belongs to the ACC deaminase/D-cysteine desulfhydrase family. In terms of assembly, homodimer. It depends on pyridoxal 5'-phosphate as a cofactor.

It carries out the reaction D-cysteine + H2O = hydrogen sulfide + pyruvate + NH4(+) + H(+). Functionally, catalyzes the alpha,beta-elimination reaction of D-cysteine and of several D-cysteine derivatives. It could be a defense mechanism against D-cysteine. The sequence is that of D-cysteine desulfhydrase from Salmonella paratyphi A (strain AKU_12601).